A 109-amino-acid polypeptide reads, in one-letter code: Nucleoid-associated protein SG0690 (109 aa).

Positions 1–23 (MFGKGGMGNLMKQAQQMQEKMQR) are disordered.

Belongs to the YbaB/EbfC family. As to quaternary structure, homodimer.

Its subcellular location is the cytoplasm. It localises to the nucleoid. In terms of biological role, binds to DNA and alters its conformation. May be involved in regulation of gene expression, nucleoid organization and DNA protection. This is Nucleoid-associated protein SG0690 from Sodalis glossinidius (strain morsitans).